The chain runs to 85 residues: MKVTLIAILTCAAVLVLHTTAAEELEAESQLMEVGMPDTELAAVDEERLFECSASCEIEKEGNKDCKKKKCKGGWKCKFNMCVKV.

Residues 1–22 (MKVTLIAILTCAAVLVLHTTAA) form the signal peptide. Residues 23–48 (EELEAESQLMEVGMPDTELAAVDEER) constitute a propeptide that is removed on maturation. Cystine bridges form between cysteine 52-cysteine 66, cysteine 56-cysteine 77, and cysteine 71-cysteine 82.

The protein belongs to the neurotoxin 12 (Hwtx-2) family. 02 (Hwtx-2) subfamily. As to expression, expressed by the venom gland.

It localises to the secreted. Functionally, postsynaptic neurotoxin. The sequence is that of U4-theraphotoxin-Hhn1c from Cyriopagopus hainanus (Chinese bird spider).